The following is a 427-amino-acid chain: Enolase (427 aa).

A (2R)-2-phosphoglycerate-binding site is contributed by Q163. E205 serves as the catalytic Proton donor. D242, E285, and D312 together coordinate Mg(2+). 4 residues coordinate (2R)-2-phosphoglycerate: K337, R366, S367, and K388. The active-site Proton acceptor is the K337.

This sequence belongs to the enolase family. Mg(2+) is required as a cofactor.

The protein resides in the cytoplasm. Its subcellular location is the secreted. It is found in the cell surface. The enzyme catalyses (2R)-2-phosphoglycerate = phosphoenolpyruvate + H2O. It functions in the pathway carbohydrate degradation; glycolysis; pyruvate from D-glyceraldehyde 3-phosphate: step 4/5. In terms of biological role, catalyzes the reversible conversion of 2-phosphoglycerate (2-PG) into phosphoenolpyruvate (PEP). It is essential for the degradation of carbohydrates via glycolysis. The chain is Enolase from Rhodopseudomonas palustris (strain HaA2).